We begin with the raw amino-acid sequence, 215 residues long: MKIFIDTANVEEIRKASKLGVLAGVTTNPSLIAKEGRDIKEVIEEICSIVDGPISAEVMALECDEMVREGIELAKIHKNIVIKIPMCEEGLKAVKVLASEGIRTNVTLIFSPLQALLAARAGASFVSPFLGRLDDIGNPGIEIVTQIAEMFALHGIDTEIISASVRNPMHVLDSAMAGSHIATIPYNVILQMVKHPLTDAGMKKFIEDYNKAFNK.

The active-site Schiff-base intermediate with substrate is the Lys83.

It belongs to the transaldolase family. Type 3B subfamily.

The protein resides in the cytoplasm. The catalysed reaction is D-sedoheptulose 7-phosphate + D-glyceraldehyde 3-phosphate = D-erythrose 4-phosphate + beta-D-fructose 6-phosphate. It functions in the pathway carbohydrate degradation; pentose phosphate pathway; D-glyceraldehyde 3-phosphate and beta-D-fructose 6-phosphate from D-ribose 5-phosphate and D-xylulose 5-phosphate (non-oxidative stage): step 2/3. Transaldolase is important for the balance of metabolites in the pentose-phosphate pathway. The sequence is that of Probable transaldolase from Clostridium perfringens (strain SM101 / Type A).